The following is an 800-amino-acid chain: Elongation factor G, mitochondrial (800 aa).

The transit peptide at 1-34 directs the protein to the mitochondrion; the sequence is MSVHTVMRTQVRSLAGMPKAAMRPLGNSFCARRY. The tr-type G domain occupies 99 to 385; sequence SKVRNIGIAA…GICDYLPNPA (287 aa). Residues 108 to 115, 183 to 187, and 237 to 240 each bind GTP; these read AHIDSGKT, DTPGH, and NKMD.

It belongs to the TRAFAC class translation factor GTPase superfamily. Classic translation factor GTPase family. EF-G/EF-2 subfamily.

The protein localises to the mitochondrion. It functions in the pathway protein biosynthesis; polypeptide chain elongation. Its function is as follows. Mitochondrial GTPase that catalyzes the GTP-dependent ribosomal translocation step during translation elongation. During this step, the ribosome changes from the pre-translocational (PRE) to the post-translocational (POST) state as the newly formed A-site-bound peptidyl-tRNA and P-site-bound deacylated tRNA move to the P and E sites, respectively. Catalyzes the coordinated movement of the two tRNA molecules, the mRNA and conformational changes in the ribosome. The polypeptide is Elongation factor G, mitochondrial (Coccidioides immitis (strain RS) (Valley fever fungus)).